A 156-amino-acid chain; its full sequence is MKLFILAVGHKMPGWIASGFDEYAKRMPPELRIELREIKPELRSGGRSAESVMAAERQKIDAALPKGARIVALDERGRDWTTMQLAQALPGWQQDGRDVAFVIGGADGLDPELKARADLLLRISSMTLPHGMVRVLLAEQLYRAWSITQNHPYHRA.

S-adenosyl-L-methionine is bound by residues Leu73, Gly104, and 123-128; that span reads ISSMTL.

The protein belongs to the RNA methyltransferase RlmH family. Homodimer.

Its subcellular location is the cytoplasm. It catalyses the reaction pseudouridine(1915) in 23S rRNA + S-adenosyl-L-methionine = N(3)-methylpseudouridine(1915) in 23S rRNA + S-adenosyl-L-homocysteine + H(+). Its function is as follows. Specifically methylates the pseudouridine at position 1915 (m3Psi1915) in 23S rRNA. The sequence is that of Ribosomal RNA large subunit methyltransferase H from Burkholderia multivorans (strain ATCC 17616 / 249).